We begin with the raw amino-acid sequence, 946 residues long: ATP-dependent 6-phosphofructokinase subunit beta (946 aa).

An N-terminal catalytic PFK domain 1 region spans residues 1-559; it reads MISIVNGTST…HLANFMAMNT (559 aa). ATP contacts are provided by residues Gly192, 256–257, and 286–289; these read RC and GDGS. Asp287 contributes to the Mg(2+) binding site. Beta-D-fructose 6-phosphate contacts are provided by residues 332 to 334, Arg369, 376 to 378, Glu433, Arg461, and 467 to 470; these read SID, MGR, and HVQR. Asp334 acts as the Proton acceptor in catalysis. An interdomain linker region spans residues 560-573; the sequence is ANHEKPTLPREKRK. Residues 574–946 form a C-terminal regulatory PFK domain 2 region; the sequence is KIAIINIGAP…LVGRTRLDKP (373 aa). Residues Arg644, 702–706, 747–749, Lys833, 839–842, and Arg920 contribute to the beta-D-fructose 2,6-bisphosphate site; these read TISNN, QGG, and HVQQ.

Belongs to the phosphofructokinase type A (PFKA) family. ATP-dependent PFK group I subfamily. Eukaryotic two domain clade 'E' sub-subfamily. In terms of assembly, heterooctamer of 4 alpha and 4 beta chains. Mg(2+) is required as a cofactor.

The protein resides in the cytoplasm. The catalysed reaction is beta-D-fructose 6-phosphate + ATP = beta-D-fructose 1,6-bisphosphate + ADP + H(+). It participates in carbohydrate degradation; glycolysis; D-glyceraldehyde 3-phosphate and glycerone phosphate from D-glucose: step 3/4. Allosterically activated by ADP, AMP, or fructose 2,6-bisphosphate, and allosterically inhibited by ATP or citrate. Functionally, catalyzes the phosphorylation of D-fructose 6-phosphate to fructose 1,6-bisphosphate by ATP, the first committing step of glycolysis. The polypeptide is ATP-dependent 6-phosphofructokinase subunit beta (PFK2) (Candida albicans (Yeast)).